The chain runs to 263 residues: MPRLTVGTKNMLYPLQKTLAVGSCKPEQVPIRSLASVVESSSKILDKSGSDREVDINVSEKIYKWTKAGIEQGKEHFKVGGNKVYFPKARIILLRPNAKHTPYQAKFIVPKSFNKLDLRDYLYHIYGLRAMNITTQLLHGKFNRMNLQTTRFREPQIKKMTIEMEEPFIWPEEPRPDENSFWDSTTPDNMEKYREERLNCLGSDANKPGTAFDGVVGPYERVAQPFIPRFLKREIDNKRERHAAELQRADKLIALNRYIEDLH.

A mitochondrion-targeting transit peptide spans 1 to 45; sequence MPRLTVGTKNMLYPLQKTLAVGSCKPEQVPIRSLASVVESSSKIL.

This sequence belongs to the universal ribosomal protein uL23 family. As to quaternary structure, component of the mitochondrial large ribosomal subunit (mt-LSU). Mature yeast 74S mitochondrial ribosomes consist of a small (37S) and a large (54S) subunit. The 37S small subunit contains a 15S ribosomal RNA (15S mt-rRNA) and 34 different proteins. The 54S large subunit contains a 21S rRNA (21S mt-rRNA) and 46 different proteins. uL23m forms the wall of the exit tunnel. Interacts with the C-terminus of OXA1.

It localises to the mitochondrion. Functionally, component of the mitochondrial ribosome (mitoribosome), a dedicated translation machinery responsible for the synthesis of mitochondrial genome-encoded proteins, including at least some of the essential transmembrane subunits of the mitochondrial respiratory chain. The mitoribosomes are attached to the mitochondrial inner membrane and translation products are cotranslationally integrated into the membrane. The protein is Large ribosomal subunit protein uL23m (MRP20) of Saccharomyces cerevisiae (strain ATCC 204508 / S288c) (Baker's yeast).